The sequence spans 289 residues: Type III pantothenate kinase (289 aa).

9–16 (DAGNSRVK) contributes to the ATP binding site. Residues Tyr106 and 113 to 116 (GSDR) contribute to the substrate site. Asp115 functions as the Proton acceptor in the catalytic mechanism. Thr139 contacts ATP. Thr209 contacts substrate.

Belongs to the type III pantothenate kinase family. As to quaternary structure, homodimer. NH4(+) serves as cofactor. The cofactor is K(+).

The protein resides in the cytoplasm. The catalysed reaction is (R)-pantothenate + ATP = (R)-4'-phosphopantothenate + ADP + H(+). The protein operates within cofactor biosynthesis; coenzyme A biosynthesis; CoA from (R)-pantothenate: step 1/5. Catalyzes the phosphorylation of pantothenate (Pan), the first step in CoA biosynthesis. In Paraburkholderia phymatum (strain DSM 17167 / CIP 108236 / LMG 21445 / STM815) (Burkholderia phymatum), this protein is Type III pantothenate kinase.